Here is an 82-residue protein sequence, read N- to C-terminus: MSNKGQLLQDPFLNALRREHVPVSIYLVNGIKLQGQIESFDQYVVLLRNTVTQMVYKHAISTIVPGRAVNFSTGEGDEPAAA.

In terms of domain architecture, Sm spans 10–69 (DPFLNALRREHVPVSIYLVNGIKLQGQIESFDQYVVLLRNTVTQMVYKHAISTIVPGRAV).

This sequence belongs to the Hfq family. As to quaternary structure, homohexamer.

RNA chaperone that binds small regulatory RNA (sRNAs) and mRNAs to facilitate mRNA translational regulation in response to envelope stress, environmental stress and changes in metabolite concentrations. Also binds with high specificity to tRNAs. The sequence is that of RNA-binding protein Hfq from Albidiferax ferrireducens (strain ATCC BAA-621 / DSM 15236 / T118) (Rhodoferax ferrireducens).